A 157-amino-acid polypeptide reads, in one-letter code: Small ribosomal subunit protein uS7 (157 aa).

The protein belongs to the universal ribosomal protein uS7 family. Part of the 30S ribosomal subunit. Contacts proteins S9 and S11.

One of the primary rRNA binding proteins, it binds directly to 16S rRNA where it nucleates assembly of the head domain of the 30S subunit. Is located at the subunit interface close to the decoding center, probably blocks exit of the E-site tRNA. The sequence is that of Small ribosomal subunit protein uS7 from Blochmanniella floridana.